A 445-amino-acid polypeptide reads, in one-letter code: ATP-dependent protease ATPase subunit HslU (445 aa).

Residues isoleucine 18, 60-65 (GVGKTE), aspartate 258, glutamate 323, and arginine 395 contribute to the ATP site.

Belongs to the ClpX chaperone family. HslU subfamily. In terms of assembly, a double ring-shaped homohexamer of HslV is capped on each side by a ring-shaped HslU homohexamer. The assembly of the HslU/HslV complex is dependent on binding of ATP.

The protein localises to the cytoplasm. Its function is as follows. ATPase subunit of a proteasome-like degradation complex; this subunit has chaperone activity. The binding of ATP and its subsequent hydrolysis by HslU are essential for unfolding of protein substrates subsequently hydrolyzed by HslV. HslU recognizes the N-terminal part of its protein substrates and unfolds these before they are guided to HslV for hydrolysis. This Syntrophotalea carbinolica (strain DSM 2380 / NBRC 103641 / GraBd1) (Pelobacter carbinolicus) protein is ATP-dependent protease ATPase subunit HslU.